Here is a 195-residue protein sequence, read N- to C-terminus: Urease accessory protein UreG (195 aa).

A GTP-binding site is contributed by 9–16 (GPVGSGKT).

It belongs to the SIMIBI class G3E GTPase family. UreG subfamily. As to quaternary structure, homodimer. UreD, UreF and UreG form a complex that acts as a GTP-hydrolysis-dependent molecular chaperone, activating the urease apoprotein by helping to assemble the nickel containing metallocenter of UreC. The UreE protein probably delivers the nickel.

It is found in the cytoplasm. Facilitates the functional incorporation of the urease nickel metallocenter. This process requires GTP hydrolysis, probably effectuated by UreG. This chain is Urease accessory protein UreG, found in Aliarcobacter butzleri (strain RM4018) (Arcobacter butzleri).